A 245-amino-acid chain; its full sequence is Transcriptional regulatory protein YpdB (245 aa).

Positions 2-116 (KVIIVEDEFL…RITGMLQKLE (115 aa)) constitute a Response regulatory domain. Aspartate 53 carries the 4-aspartylphosphate modification. Residues 140 to 245 (INLVKDERII…VKEFRQLMHL (106 aa)) form the HTH LytTR-type domain.

Phosphorylated by YpdA.

The protein resides in the cytoplasm. Member of the two-component regulatory system YpdA/YpdB. YpdB regulates expression of yhjX by binding to its promoter region. The polypeptide is Transcriptional regulatory protein YpdB (ypdB) (Escherichia coli O6:H1 (strain CFT073 / ATCC 700928 / UPEC)).